The primary structure comprises 241 residues: Purine nucleoside phosphorylase DeoD-type 1 (241 aa).

An a purine D-ribonucleoside-binding site is contributed by H5. Residues G21, R25, R44, and 88–91 each bind phosphate; that span reads RVGS. Residues 180–182 and 204–205 each bind a purine D-ribonucleoside; these read EME and SD. The active-site Proton donor is the D205.

The protein belongs to the PNP/UDP phosphorylase family. As to quaternary structure, homohexamer; trimer of homodimers.

It carries out the reaction a purine D-ribonucleoside + phosphate = a purine nucleobase + alpha-D-ribose 1-phosphate. The enzyme catalyses a purine 2'-deoxy-D-ribonucleoside + phosphate = a purine nucleobase + 2-deoxy-alpha-D-ribose 1-phosphate. Its function is as follows. Catalyzes the reversible phosphorolytic breakdown of the N-glycosidic bond in the beta-(deoxy)ribonucleoside molecules, with the formation of the corresponding free purine bases and pentose-1-phosphate. This is Purine nucleoside phosphorylase DeoD-type 1 from Vibrio cholerae serotype O1 (strain ATCC 39315 / El Tor Inaba N16961).